We begin with the raw amino-acid sequence, 674 residues long: Forkhead box protein P1 (674 aa).

The segment covering 1–19 has biased composition (polar residues); that stretch reads MMQESGTETKSNGSAIQNG. The tract at residues 1–44 is disordered; the sequence is MMQESGTETKSNGSAIQNGSSGGNHLLECGSLREGRSNGETPAV. Ser-82 is subject to Phosphoserine. The span at 269–281 shows a compositional bias: polar residues; sequence MNPHASTNGQLSV. The tract at residues 269-296 is disordered; sequence MNPHASTNGQLSVHTPKRESLSHEEHPH. The segment covering 284–296 has biased composition (basic and acidic residues); the sequence is PKRESLSHEEHPH. Lys-285 is covalently cross-linked (Glycyl lysine isopeptide (Lys-Gly) (interchain with G-Cter in SUMO2)). The C2H2-type zinc finger occupies 304-329; sequence GVCKWPGCEAVCEDFQSFLKHLNSEH. The interval 346 to 367 is leucine-zipper; it reads VQQLELQLAKDKERLQAMMTHL. Residues Lys-370 and Lys-375 each participate in a glycyl lysine isopeptide (Lys-Gly) (interchain with G-Cter in SUMO2) cross-link. The segment at 380–384 is CTBP1-binding; sequence PLNLV. The span at 388–401 shows a compositional bias: polar residues; sequence TLSKSASEASPQSL. The disordered stretch occupies residues 388 to 427; it reads TLSKSASEASPQSLPHTPTTPTAPITPATQGPSVITTTSM. Over residues 402–419 the composition is skewed to low complexity; sequence PHTPTTPTAPITPATQGP. Lys-440 participates in a covalent cross-link: Glycyl lysine isopeptide (Lys-Gly) (interchain with G-Cter in SUMO2). Positions 462–552 form a DNA-binding region, fork-head; that stretch reads RPPFTYASLI…PQKISGNPSL (91 aa). The interval 608-674 is disordered; that stretch reads EHTNSNESDS…EDEPVNEDME (67 aa). A compositionally biased stretch (polar residues) spans 609 to 620; it reads HTNSNESDSSPG. The residue at position 650 (Thr-650) is a Phosphothreonine. Ser-655 carries the post-translational modification Phosphoserine. A compositionally biased stretch (acidic residues) spans 664 to 674; it reads YEDEPVNEDME.

In terms of assembly, forms homodimers and heterodimers with FOXP2 and FOXP4. Dimerization is required for DNA-binding. Self-associates. Interacts with CTBP1. Interacts with NCOR2 and AR. Interacts with FOXP2. Interacts with TBR1. Interacts with AURKA; this interaction facilitates the phosphorylation of FOXP1, which suppresses the expression of FBXL7. Interacts with ZMYM2.

It localises to the nucleus. Transcriptional repressor. Can act with CTBP1 to synergistically repress transcription but CTPBP1 is not essential. Plays an important role in the specification and differentiation of lung epithelium. Acts cooperatively with FOXP4 to regulate lung secretory epithelial cell fate and regeneration by restricting the goblet cell lineage program; the function may involve regulation of AGR2. Essential transcriptional regulator of B-cell development. Involved in regulation of cardiac muscle cell proliferation. Involved in the columnar organization of spinal motor neurons. Promotes the formation of the lateral motor neuron column (LMC) and the preganglionic motor column (PGC) and is required for respective appropriate motor axon projections. The segment-appropriate generation of spinal cord motor columns requires cooperation with other Hox proteins. Can regulate PITX3 promoter activity; may promote midbrain identity in embryonic stem cell-derived dopamine neurons by regulating PITX3. Negatively regulates the differentiation of T follicular helper cells T(FH)s. Involved in maintenance of hair follicle stem cell quiescence; the function probably involves regulation of FGF18. Represses transcription of various pro-apoptotic genes and cooperates with NF-kappa B-signaling in promoting B-cell expansion by inhibition of caspase-dependent apoptosis. Binds to CSF1R promoter elements and is involved in regulation of monocyte differentiation and macrophage functions; repression of CSF1R in monocytes seems to involve NCOR2 as corepressor. Involved in endothelial cell proliferation, tube formation and migration indicative for a role in angiogenesis; the role in neovascularization seems to implicate suppression of SEMA5B. Can negatively regulate androgen receptor signaling. Acts as a transcriptional activator of the FBXL7 promoter; this activity is regulated by AURKA. This is Forkhead box protein P1 (FOXP1) from Bos taurus (Bovine).